The sequence spans 322 residues: D-alanine--D-alanine ligase (322 aa).

The ATP-grasp domain occupies 110-310; that stretch reads KAVLAAAGIP…FDRLVFWIVE (201 aa). 137–191 provides a ligand contact to ATP; sequence MPPPYVVKPNAEGSSVGVSLVFEGANGPPRQLAAPDWAFGEQVMVEPYIPGLELA. Positions 263, 277, and 279 each coordinate Mg(2+).

It belongs to the D-alanine--D-alanine ligase family. Requires Mg(2+) as cofactor. It depends on Mn(2+) as a cofactor.

The protein localises to the cytoplasm. It catalyses the reaction 2 D-alanine + ATP = D-alanyl-D-alanine + ADP + phosphate + H(+). It functions in the pathway cell wall biogenesis; peptidoglycan biosynthesis. Functionally, cell wall formation. The chain is D-alanine--D-alanine ligase from Caulobacter sp. (strain K31).